A 101-amino-acid chain; its full sequence is Ubiquitin-related modifier 1 homolog 1 (101 aa).

Glycine 101 is subject to 1-thioglycine. A Glycyl lysine isopeptide (Gly-Lys) (interchain with K-? in acceptor proteins) cross-link involves residue glycine 101.

This sequence belongs to the URM1 family. In terms of processing, C-terminal thiocarboxylation occurs in 2 steps, it is first acyl-adenylated (-COAMP) via the hesA/moeB/thiF part of the MOCS3 homolog, then thiocarboxylated (-COSH) via the rhodanese domain of the MOCS3 homolog.

It is found in the cytoplasm. Its pathway is tRNA modification; 5-methoxycarbonylmethyl-2-thiouridine-tRNA biosynthesis. Its function is as follows. Acts as a sulfur carrier required for 2-thiolation of mcm(5)S(2)U at tRNA wobble positions of cytosolic tRNA(Lys), tRNA(Glu) and tRNA(Gln). Serves as sulfur donor in tRNA 2-thiolation reaction by being thiocarboxylated (-COSH) at its C-terminus by MOCS3. The sulfur is then transferred to tRNA to form 2-thiolation of mcm(5)S(2)U. Also acts as a ubiquitin-like protein (UBL) that is covalently conjugated via an isopeptide bond to lysine residues of target proteins. The thiocarboxylated form serves as substrate for conjugation and oxidative stress specifically induces the formation of UBL-protein conjugates. In Arabidopsis thaliana (Mouse-ear cress), this protein is Ubiquitin-related modifier 1 homolog 1.